Reading from the N-terminus, the 95-residue chain is DNA-directed RNA polymerase subunit Rpo6 (95 aa).

It belongs to the archaeal Rpo6/eukaryotic RPB6 RNA polymerase subunit family. In terms of assembly, part of the RNA polymerase complex.

Its subcellular location is the cytoplasm. It catalyses the reaction RNA(n) + a ribonucleoside 5'-triphosphate = RNA(n+1) + diphosphate. Its function is as follows. DNA-dependent RNA polymerase (RNAP) catalyzes the transcription of DNA into RNA using the four ribonucleoside triphosphates as substrates. The sequence is that of DNA-directed RNA polymerase subunit Rpo6 from Saccharolobus islandicus (strain M.16.27) (Sulfolobus islandicus).